The chain runs to 199 residues: uncharacterized protein (199 aa).

To U.parvum UU376.

This is an uncharacterized protein from Ureaplasma parvum serovar 3 (strain ATCC 700970).